Reading from the N-terminus, the 303-residue chain is MSVRHFTDLSTVSEGDLRFMLDDAVVRKARLKAGERTRPLEGKVLAMIFDKPSTRTRVSFDVGMRQLGGETIMLTGTEMQLGRSETIADTAKVLSRYVDAIMIRTTSHDRLLELTENATVPVINGLTDDTHPCQLMADIMTFEEHRGPVAGKTIAWTGDGNNVLHSLLEASARFRFNLNVAVPEGSEPAQKHIDWSKAHGGKLHFTRSPEEAVDQADCVVTDCWVSMGQEHRARGHNVFSPYQVNAKLMAHAKPDALFMHCLPAHRGEEVTDEVIDGPHSVVFDEAENRLHAQKAVLAWCLGA.

Carbamoyl phosphate-binding positions include 53–56 (STRT), glutamine 80, arginine 104, and 131–134 (HPCQ). L-ornithine is bound by residues asparagine 162, aspartate 222, and 226-227 (SM). Carbamoyl phosphate contacts are provided by residues 261–262 (CL) and arginine 289.

The protein belongs to the aspartate/ornithine carbamoyltransferase superfamily. OTCase family.

Its subcellular location is the cytoplasm. The catalysed reaction is carbamoyl phosphate + L-ornithine = L-citrulline + phosphate + H(+). It participates in amino-acid biosynthesis; L-arginine biosynthesis; L-arginine from L-ornithine and carbamoyl phosphate: step 1/3. Reversibly catalyzes the transfer of the carbamoyl group from carbamoyl phosphate (CP) to the N(epsilon) atom of ornithine (ORN) to produce L-citrulline. This is Ornithine carbamoyltransferase from Mesorhizobium japonicum (strain LMG 29417 / CECT 9101 / MAFF 303099) (Mesorhizobium loti (strain MAFF 303099)).